Consider the following 405-residue polypeptide: D-threonate kinase (405 aa).

Substrate contacts are provided by residues Asp12, Arg59, and 88 to 91; that span reads KVDS. Residues Ser243, 337 to 340, and Gly383 each bind ATP; that span reads GGDG.

It belongs to the four-carbon acid sugar kinase family.

It carries out the reaction D-threonate + ATP = 4-O-phospho-D-threonate + ADP + H(+). Functionally, catalyzes the ATP-dependent phosphorylation of D-threonate to D-threonate 4-phosphate. Can also phosphorylate 4-hydroxy-L-threonine, with lower efficiency. The chain is D-threonate kinase from Bordetella bronchiseptica (strain ATCC BAA-588 / NCTC 13252 / RB50) (Alcaligenes bronchisepticus).